Consider the following 540-residue polypeptide: MDGYEATRIVLSRIQSLDPENASKIMGLLLLQDHGEKEMIRLAFGPETLVHSVIVKAKKELGLMNCSRSPWSHQDELISPKNNRGSSLNPASLPFYANGGRSSRDLTNDFELMDDMNSRSTDFLGSVHARSGSCVLDGLGYGGDSDLGFGGVPCSYFARGFCKNGASCRFVHSDGGADLVGSPSRIELLRSNSVPPRLAHHFMTRSSLPSFSTKGVNLQQNDVQRAAAALMIGDELQKLGRWRPERIDLSAMACPASRQIYLTFPADSRFREEDVSNYFSTFGPVQDVRIPYQQKRMFGFVTFVYPETVKSILAKGNPHFVCDSRVLVKPYKEKGKVPDKYRTNQTTERELSPTGLDSSPRDVLGGRGFYNNTQDVLWRSKFEEEILELQSRRLMNLQLLDVKKHFQLNSPTNIHSPNPFSQSLISPRPLSVIKREYDGGEKGKGSSKEGSDDDTMNLPERLEDSLPDSPFASPAHHLLLFADSADNNGSDLWSPSSDNDDNSTPSTLSDSFNSFNYQMPRLPAIGMLPGRGGPTCRVGI.

The C3H1-type zinc-finger motif lies at 148–175 (GFGGVPCSYFARGFCKNGASCRFVHSDG). In terms of domain architecture, RRM spans 258 to 334 (RQIYLTFPAD…RVLVKPYKEK (77 aa)). Composition is skewed to basic and acidic residues over residues 337–351 (VPDKYRTNQTTEREL) and 436–450 (EYDGGEKGKGSSKEG). 3 disordered regions span residues 337–365 (VPDKYRTNQTTERELSPTGLDSSPRDVLG), 436–469 (EYDGGEKGKGSSKEGSDDDTMNLPERLEDSLPDS), and 490–514 (SDLWSPSSDNDDNSTPSTLSDSFNS). A Phosphoserine modification is found at S451. Residues 490–511 (SDLWSPSSDNDDNSTPSTLSDS) show a composition bias toward low complexity.

Its function is as follows. Possesses RNA-binding and ribonuclease activities in vitro. In Arabidopsis thaliana (Mouse-ear cress), this protein is Zinc finger CCCH domain-containing protein 46.